We begin with the raw amino-acid sequence, 441 residues long: UDP-N-acetylmuramoylalanine--D-glutamate ligase (441 aa).

ATP is bound at residue 112–118; that stretch reads GTNGKTT.

It belongs to the MurCDEF family.

Its subcellular location is the cytoplasm. The catalysed reaction is UDP-N-acetyl-alpha-D-muramoyl-L-alanine + D-glutamate + ATP = UDP-N-acetyl-alpha-D-muramoyl-L-alanyl-D-glutamate + ADP + phosphate + H(+). It functions in the pathway cell wall biogenesis; peptidoglycan biosynthesis. Functionally, cell wall formation. Catalyzes the addition of glutamate to the nucleotide precursor UDP-N-acetylmuramoyl-L-alanine (UMA). This Gloeobacter violaceus (strain ATCC 29082 / PCC 7421) protein is UDP-N-acetylmuramoylalanine--D-glutamate ligase.